A 722-amino-acid chain; its full sequence is Polyribonucleotide nucleotidyltransferase (722 aa).

2 residues coordinate Mg(2+): Asp486 and Asp492. In terms of domain architecture, KH spans 553–612 (PKIVQLQIDIDKISLVIGSTGKTVKAITDEFEVKVQIEQNGKIILFGDDDFKMQKAKERI). An S1 motif domain is found at 622–717 (GEIYEGTVKK…KFGKIDLEIV (96 aa)).

It belongs to the polyribonucleotide nucleotidyltransferase family. Mg(2+) serves as cofactor.

The protein resides in the cytoplasm. It carries out the reaction RNA(n+1) + phosphate = RNA(n) + a ribonucleoside 5'-diphosphate. Involved in mRNA degradation. Catalyzes the phosphorolysis of single-stranded polyribonucleotides processively in the 3'- to 5'-direction. The chain is Polyribonucleotide nucleotidyltransferase from Borreliella burgdorferi (strain ZS7) (Borrelia burgdorferi).